We begin with the raw amino-acid sequence, 290 residues long: Polyamine aminopropyltransferase (290 aa).

In terms of domain architecture, PABS spans 5–238 (QLWYEKLHSS…GIMTFAWASE (234 aa)). Residue glutamine 33 coordinates S-methyl-5'-thioadenosine. Histidine 64 and aspartate 88 together coordinate spermidine. S-methyl-5'-thioadenosine-binding positions include glutamate 108 and 140–141 (DG). Catalysis depends on aspartate 158, which acts as the Proton acceptor. 158–161 (DSTD) is a spermidine binding site. Proline 165 contacts S-methyl-5'-thioadenosine.

This sequence belongs to the spermidine/spermine synthase family. In terms of assembly, homodimer or homotetramer.

Its subcellular location is the cytoplasm. It carries out the reaction S-adenosyl 3-(methylsulfanyl)propylamine + putrescine = S-methyl-5'-thioadenosine + spermidine + H(+). It functions in the pathway amine and polyamine biosynthesis; spermidine biosynthesis; spermidine from putrescine: step 1/1. Catalyzes the irreversible transfer of a propylamine group from the amino donor S-adenosylmethioninamine (decarboxy-AdoMet) to putrescine (1,4-diaminobutane) to yield spermidine. The sequence is that of Polyamine aminopropyltransferase from Hamiltonella defensa subsp. Acyrthosiphon pisum (strain 5AT).